Here is a 248-residue protein sequence, read N- to C-terminus: tRNA (guanine-N(1)-)-methyltransferase (248 aa).

S-adenosyl-L-methionine contacts are provided by residues G113 and 133–138; that span reads IGDFVL.

The protein belongs to the RNA methyltransferase TrmD family. As to quaternary structure, homodimer.

It localises to the cytoplasm. The enzyme catalyses guanosine(37) in tRNA + S-adenosyl-L-methionine = N(1)-methylguanosine(37) in tRNA + S-adenosyl-L-homocysteine + H(+). In terms of biological role, specifically methylates guanosine-37 in various tRNAs. This Dehalococcoides mccartyi (strain CBDB1) protein is tRNA (guanine-N(1)-)-methyltransferase.